Consider the following 336-residue polypeptide: D-aspartate oxidase (336 aa).

E34, K35, T41, S42, G304, V308, and S309 together coordinate FAD. The Microbody targeting signal motif lies at 334 to 336 (SKL).

It belongs to the DAMOX/DASOX family. As to quaternary structure, monomer. It depends on FAD as a cofactor.

The protein localises to the peroxisome matrix. The enzyme catalyses D-aspartate + O2 + H2O = oxaloacetate + H2O2 + NH4(+). It carries out the reaction D-glutamate + O2 + H2O = H2O2 + 2-oxoglutarate + NH4(+). In terms of biological role, selectively catalyzes the oxidative deamination of acidic amino acids. Suppresses the level of D-aspartate in the brain, an amino acid that can act as an agonist for glutamate receptors. Protects the organism from the toxicity of D-amino acids. May also function in the intestine. The polypeptide is D-aspartate oxidase (Octopus vulgaris (Common octopus)).